We begin with the raw amino-acid sequence, 366 residues long: MIRTEEMLLNVGPQHPSTHGVFRLVIKIDGEIIKEATPVIGYLHRGTEKIAESLQYTQIIPYTDRMDYLSAMTNNYVICHAVETMMGLEIPERAEYLRVLAMELGRIASHLVWWGTNLLDIGAVSPFLYAFREREMIINLLNELCGARLTFNYMRVGGVKWDAPDGWIEKVEEFVPYMREQLAGYHDLVSGNEIFLNRVKGVGIYSAEEAISYSLSGANLRCTGVNWDLRKDEPYSIYDRFDFHIPVGSVGDAWDRYVCRMQEIEESLKIVEQAVQQFPKEGAVLAKVPKIIKAPKGEAFVRIESPRGEIGCYIASDGKKEPYRLKFRRPSFYNLQILPKLLKGENIANLITILGGVDIVLGEVDG.

Belongs to the complex I 49 kDa subunit family. In terms of assembly, NDH-1 is composed of 14 different subunits. Subunits NuoB, C, D, E, F, and G constitute the peripheral sector of the complex.

The protein resides in the cell membrane. It carries out the reaction a quinone + NADH + 5 H(+)(in) = a quinol + NAD(+) + 4 H(+)(out). Its function is as follows. NDH-1 shuttles electrons from NADH, via FMN and iron-sulfur (Fe-S) centers, to quinones in the respiratory chain. The immediate electron acceptor for the enzyme in this species is believed to be a menaquinone. Couples the redox reaction to proton translocation (for every two electrons transferred, four hydrogen ions are translocated across the cytoplasmic membrane), and thus conserves the redox energy in a proton gradient. This Bacillus thuringiensis subsp. konkukian (strain 97-27) protein is NADH-quinone oxidoreductase subunit D.